Consider the following 422-residue polypeptide: 5-hydroxytryptamine receptor 1A (422 aa).

The tract at residues 1–23 is disordered; sequence MDVLSPGQGNNTTSPPAPFETGG. At 1-38 the chain is on the extracellular side; it reads MDVLSPGQGNNTTSPPAPFETGGNTTGISDVTVSYQVI. N-linked (GlcNAc...) asparagine glycans are attached at residues Asn-10, Asn-11, and Asn-24. A helical membrane pass occupies residues 39 to 59; it reads TSLLLGTLIFCAVLGNACVVA. At 60–73 the chain is on the cytoplasmic side; it reads AIALERSLQNVANY. A helical membrane pass occupies residues 74–98; sequence LIGSLAVTDLMVSVLVLPMAALYQV. Over 99–107 the chain is Extracellular; that stretch reads LNKWTLGQV. Residues 108–132 traverse the membrane as a helical segment; that stretch reads TCDLFIALDVLCCTSSILHLCAIAL. Cys-109 and Cys-187 are joined by a disulfide. 2 residues coordinate serotonin: Asp-116 and Cys-120. The DRY motif; important for ligand-induced conformation changes motif lies at 133–135; sequence DRY. The Cytoplasmic portion of the chain corresponds to 133–152; it reads DRYWAITDPIDYVNKRTPRR. A helical membrane pass occupies residues 153-174; it reads AAALISLTWLIGFLISIPPMLG. Over 175-193 the chain is Extracellular; it reads WRTPEDRSDPDACTISKDH. The helical transmembrane segment at 194 to 216 threads the bilayer; sequence GYTIYSTFGAFYIPLLLMLVLYG. At 217–346 the chain is on the cytoplasmic side; that stretch reads RIFRAARFRI…LARERKTVKT (130 aa). The tract at residues 235 to 262 is disordered; the sequence is KTGADTRHGASPAPQPKKSVNGESGSRN. Positions 314, 345, 346, and 352 each coordinate 1D-myo-inositol 4-phosphate. The chain crosses the membrane as a helical span at residues 347–370; it reads LGIIMGTFILCWLPFFIVALVLPF. The Extracellular portion of the chain corresponds to 371–378; that stretch reads CESSCHMP. The chain crosses the membrane as a helical span at residues 379–403; that stretch reads TLLGAIINWLGYSNSLLNPVIYAYF. The NPxxY motif; important for ligand-induced conformation changes and signaling signature appears at 396–400; that stretch reads NPVIY. The 1D-myo-inositol 4-phosphate site is built by Phe-403, Asn-404, and Lys-405. Topologically, residues 404–422 are cytoplasmic; that stretch reads NKDFQNAFKKIIKCKFCRQ.

The protein belongs to the G-protein coupled receptor 1 family. 5-hydroxytryptamine receptor subfamily. HTR1A sub-subfamily. As to quaternary structure, heterodimer; heterodimerizes with GPER1. Interacts with YIF1B. Interacts with GPR39 and GALR1. Detected in lymph nodes, thymus and spleen. Detected in activated T-cells, but not in resting T-cells.

Its subcellular location is the cell membrane. It localises to the cell projection. The protein resides in the dendrite. G-protein coupled receptor activity is regulated by lipids: phosphatidylinositol 4-phosphate increases HTR1A-mediated activity. Binding to aripiprazol drug is regulated by cholesterol, which shapes the ligand-binding pocket, determining the specificity for aripiprazol. Activated by IHCH-7179 small molecule: IHCH-7179 acts both as an agonist activator for HTR1A and as an antagonist inhibitor for HTR2A. Activated by SEP-363856 small molecule: IHCH-7179 acts both as an agonist activator for HTR1A and TAAR1. G-protein coupled receptor for 5-hydroxytryptamine (serotonin). Also functions as a receptor for various drugs and psychoactive substances. Ligand binding causes a conformation change that triggers signaling via guanine nucleotide-binding proteins (G proteins) and modulates the activity of downstream effectors, such as adenylate cyclase. HTR1A is coupled to G(i)/G(o) G alpha proteins and mediates inhibitory neurotransmission: signaling inhibits adenylate cyclase activity and activates a phosphatidylinositol-calcium second messenger system that regulates the release of Ca(2+) ions from intracellular stores. Beta-arrestin family members regulate signaling by mediating both receptor desensitization and resensitization processes. Plays a role in the regulation of 5-hydroxytryptamine release and in the regulation of dopamine and 5-hydroxytryptamine metabolism. Plays a role in the regulation of dopamine and 5-hydroxytryptamine levels in the brain, and thereby affects neural activity, mood and behavior. Plays a role in the response to anxiogenic stimuli. The sequence is that of 5-hydroxytryptamine receptor 1A from Homo sapiens (Human).